Here is a 617-residue protein sequence, read N- to C-terminus: DNA mismatch repair protein MutL (617 aa).

This sequence belongs to the DNA mismatch repair MutL/HexB family.

In terms of biological role, this protein is involved in the repair of mismatches in DNA. It is required for dam-dependent methyl-directed DNA mismatch repair. May act as a 'molecular matchmaker', a protein that promotes the formation of a stable complex between two or more DNA-binding proteins in an ATP-dependent manner without itself being part of a final effector complex. This chain is DNA mismatch repair protein MutL, found in Christiangramia forsetii (strain DSM 17595 / CGMCC 1.15422 / KT0803) (Gramella forsetii).